Reading from the N-terminus, the 309-residue chain is Probable manganese-dependent inorganic pyrophosphatase (309 aa).

Positions 9, 13, 15, 75, 97, and 149 each coordinate Mn(2+).

This sequence belongs to the PPase class C family. It depends on Mn(2+) as a cofactor.

It localises to the cytoplasm. The enzyme catalyses diphosphate + H2O = 2 phosphate + H(+). This Bacillus cereus (strain 03BB102) protein is Probable manganese-dependent inorganic pyrophosphatase.